A 569-amino-acid polypeptide reads, in one-letter code: Formate--tetrahydrofolate ligase (569 aa).

68–75 is an ATP binding site; it reads TPAGEGKT.

This sequence belongs to the formate--tetrahydrofolate ligase family.

The enzyme catalyses (6S)-5,6,7,8-tetrahydrofolate + formate + ATP = (6R)-10-formyltetrahydrofolate + ADP + phosphate. Its pathway is one-carbon metabolism; tetrahydrofolate interconversion. The chain is Formate--tetrahydrofolate ligase from Psychrobacter sp. (strain PRwf-1).